The primary structure comprises 538 residues: ESX-3 secretion system ATPase EccB3 (538 aa).

The span at 1–16 shows a compositional bias: basic and acidic residues; sequence MTNQQHDHDFDHDRRS. Positions 1-25 are disordered; it reads MTNQQHDHDFDHDRRSFASRTPVNN. Residues 75–95 traverse the membrane as a helical segment; it reads VLMGVLIVITGLIGSFVFSLI.

Belongs to the EccB family. Part of the ESX-3 / type VII secretion system (T7SS), which is composed of cytosolic and membrane components. The ESX-3 membrane complex is composed of EccB3, EccC3, EccD3 and EccE3.

Its subcellular location is the cell inner membrane. In terms of biological role, an ATPase. Part of the ESX-3 specialized secretion system, which is important for iron and zinc uptake or homeostasis. This chain is ESX-3 secretion system ATPase EccB3, found in Mycobacterium tuberculosis (strain CDC 1551 / Oshkosh).